A 392-amino-acid chain; its full sequence is MTRFLLCSFALVLLYPSGIDMYLVGLPRIAQDLGASEAQLHIAFSVYLAGMASAMLFAGRIADRSGRKPVAIVGAAIFVIASLICAQVHTSSHFLIGRFIQGIAAGSCYVVAFAILRDTLDDRRRAKVLSLLNGITCIIPVLAPVLGHLIMLKYPWQSLFYTMTGMGVMVAVLSVFILRETRPTAPPQAALPQHDAGESLLNRFFLSRLLITTLSVTVILTYVNVSPVLMMEEMGFDRGTYSMAMALMAMISMAVSFSTPFVLSLFNPRTLMLTSQVLFLAAGVTLSLATRQAVTLIGLGMICAGFSVGFGVAMSQALGPFTLRAGVASSVLGIAQVCGSSLWIWLAAIIGLSAMNMLIGILIACSIVSLVLLLVVTPPRVAQYDEEAAVES.

12 helical membrane passes run 4 to 24 (FLLCSFALVLLYPSGIDMYLV), 38 to 58 (AQLHIAFSVYLAGMASAMLFA), 69 to 89 (PVAIVGAAIFVIASLICAQVH), 95 to 115 (LIGRFIQGIAAGSCYVVAFAI), 131 to 151 (LLNGITCIIPVLAPVLGHLIM), 158 to 178 (SLFYTMTGMGVMVAVLSVFIL), 209 to 229 (LLITTLSVTVILTYVNVSPVL), 246 to 266 (ALMAMISMAVSFSTPFVLSLF), 270 to 290 (TLMLTSQVLFLAAGVTLSLAT), 294 to 314 (VTLIGLGMICAGFSVGFGVAM), 331 to 351 (VLGIAQVCGSSLWIWLAAIIG), and 357 to 377 (MLIGILIACSIVSLVLLLVVT).

It belongs to the major facilitator superfamily. DHA1 family. MdtL (TC 2.A.1.2.22) subfamily.

It localises to the cell inner membrane. This Klebsiella pneumoniae subsp. pneumoniae (strain ATCC 700721 / MGH 78578) protein is Multidrug resistance protein MdtL.